Here is a 108-residue protein sequence, read N- to C-terminus: Ribulose bisphosphate carboxylase small subunit (108 aa).

The protein belongs to the RuBisCO small chain family. In terms of assembly, heterohexadecamer of 8 large and 8 small subunits.

RuBisCO catalyzes two reactions: the carboxylation of D-ribulose 1,5-bisphosphate, the primary event in carbon dioxide fixation, as well as the oxidative fragmentation of the pentose substrate. Both reactions occur simultaneously and in competition at the same active site. Although the small subunit is not catalytic it is essential for maximal activity. The chain is Ribulose bisphosphate carboxylase small subunit from Nitrobacter vulgaris.